The chain runs to 250 residues: NAD-dependent protein deacetylase (250 aa).

Residues 1-244 (MECDKVGDLL…PCVVDYIKSQ (244 aa)) form the Deacetylase sirtuin-type domain. The NAD(+) site is built by Ala22, Thr26, Phe33, Arg34, Gln98, Ile100, Asp101, and His116. Residue Phe33 coordinates nicotinamide. The nicotinamide site is built by Ile100 and Asp101. The Proton acceptor role is filled by His116. Residues Cys124, Cys127, Cys149, and Cys151 each contribute to the Zn(2+) site. Positions 187, 188, 212, and 230 each coordinate NAD(+).

It belongs to the sirtuin family. Class U subfamily. Zn(2+) is required as a cofactor.

The protein resides in the cytoplasm. It carries out the reaction N(6)-acetyl-L-lysyl-[protein] + NAD(+) + H2O = 2''-O-acetyl-ADP-D-ribose + nicotinamide + L-lysyl-[protein]. Its function is as follows. NAD-dependent protein deacetylase which modulates the activities of several enzymes which are inactive in their acetylated form. Deacetylates the N-terminal lysine residue of Alba, the major archaeal chromatin protein and that, in turn, increases Alba's DNA binding affinity, thereby repressing transcription. This chain is NAD-dependent protein deacetylase, found in Sulfurisphaera tokodaii (strain DSM 16993 / JCM 10545 / NBRC 100140 / 7) (Sulfolobus tokodaii).